The primary structure comprises 285 residues: MTKSIHENGTAASVYQGSIAEYWNQEANPVNLELGEVDGYFHHHYGIGEPDWSVVEGDAATSHERTTRELHRLETWQAEFLLDHLGGVEPEHRIMDAGCGRGGSSFMAHERFGCSVEGVSLSRKQVDFANAQARERGVADKVAFHQLNMLDTGFDTASMRAIWNNESTMYVDLHDLFAEHSRLLARGGRYVTITGCYNDVYGLPSRAVSTINAHYICDIHPRSGYFRAMAANRLVPCAVVDLTEATVPYWRLRAKSPLATGIEETFIEAYTSGSFQYLLIAADRV.

This sequence belongs to the geranyl diphosphate 2-C-methyltransferase family. The cofactor is Mg(2+).

It catalyses the reaction (2E)-geranyl diphosphate + S-adenosyl-L-methionine = (E)-2-methylgeranyl diphosphate + S-adenosyl-L-homocysteine + H(+). Functionally, catalyzes the SAM-dependent methylation of geranyl diphosphate (GPP) to yield (E)-2-methylgeranyl diphosphate (2-MeGPP). This Saccharopolyspora erythraea (strain ATCC 11635 / DSM 40517 / JCM 4748 / NBRC 13426 / NCIMB 8594 / NRRL 2338) protein is Geranyl diphosphate 2-C-methyltransferase.